The chain runs to 339 residues: Transcription initiation factor IIB (339 aa).

A TFIIB-type zinc finger spans residues 39 to 70 (EELICPMCGSKNIIKDYERAEIVCETCGCVLQ). The Zn(2+) site is built by cysteine 43, cysteine 46, cysteine 62, and cysteine 65. A run of 2 repeats spans residues 156 to 239 (SELD…SREL) and 250 to 331 (DYVP…ELTE).

The protein belongs to the TFIIB family.

Its function is as follows. Stabilizes TBP binding to an archaeal box-A promoter. Also responsible for recruiting RNA polymerase II to the pre-initiation complex (DNA-TBP-TFIIB). The sequence is that of Transcription initiation factor IIB from Methanothermococcus thermolithotrophicus (Methanococcus thermolithotrophicus).